We begin with the raw amino-acid sequence, 374 residues long: tRNA N6-adenosine threonylcarbamoyltransferase (374 aa).

Residues His117 and His121 each coordinate Fe cation. Substrate contacts are provided by residues 140–144 (LVSGG), Asp174, Gly187, Asp191, and Asn283. Position 311 (Asp311) interacts with Fe cation. The span at 337–352 (ADSSLPVTEPHVPGQG) shows a compositional bias: low complexity. The tract at residues 337–374 (ADSSLPVTEPHVPGQGHPHGHPHGHDHVHEVSKENLYS) is disordered. A compositionally biased stretch (basic and acidic residues) spans 359 to 374 (HGHDHVHEVSKENLYS).

The protein belongs to the KAE1 / TsaD family. Fe(2+) serves as cofactor.

The protein localises to the cytoplasm. The enzyme catalyses L-threonylcarbamoyladenylate + adenosine(37) in tRNA = N(6)-L-threonylcarbamoyladenosine(37) in tRNA + AMP + H(+). Required for the formation of a threonylcarbamoyl group on adenosine at position 37 (t(6)A37) in tRNAs that read codons beginning with adenine. Is involved in the transfer of the threonylcarbamoyl moiety of threonylcarbamoyl-AMP (TC-AMP) to the N6 group of A37, together with TsaE and TsaB. TsaD likely plays a direct catalytic role in this reaction. The polypeptide is tRNA N6-adenosine threonylcarbamoyltransferase (Streptomyces coelicolor (strain ATCC BAA-471 / A3(2) / M145)).